A 493-amino-acid chain; its full sequence is Aerolysin (493 aa).

The N-terminal stretch at 1 to 23 (MQKIKLTGLSLIISGLLMAQAQA) is a signal peptide. 2 disulfide bridges follow: cysteine 42–cysteine 98 and cysteine 182–cysteine 187. The tract at residues 68 to 84 (WQISGLANGWVIMGPGY) is interaction with host N-linked glycan. The interval 256–288 (YGLSEKVTTKNKFKWPLVGETELSIEIAANQSW) is part of the transmembrane beta-barrel after proteolytic activation of the toxin and insertion into the host membrane. The segment at 346-355 (RWGGNAWYTH) is interaction with glycans from host GPI-anchor. The propeptide occupies 446–493 (AADSKVRRARSVDGAGQGLRLEIPLDAQELSGLGFNNVSLSVTPAANQ).

Belongs to the aerolysin family. Homodimer in solution; homoheptamer in the host membrane. After binding to GPI-anchored proteins in target membranes and proteolytic removal of the C-terminal propeptide, the protein assembles into a heptameric pre-pore complex. A further conformation change leads to insertion into the host membrane. Proteolytic cleavage and subsequent release of the propeptide trigger a major conformation change, leading to the formation of a heptameric pre-pore that then inserts into the host membrane.

Its subcellular location is the secreted. It localises to the host cell membrane. Functionally, secreted, cytolytic toxin that forms pores in host membranes after proteolytic removal of a C-terminal propeptide, leading to destruction of the membrane permeability barrier and host cell death. The pores are formed by transmembrane beta-strands and are approximately 3 nm in diameter. This is Aerolysin (aerA) from Aeromonas hydrophila.